A 469-amino-acid polypeptide reads, in one-letter code: Probable periplasmic serine endoprotease DegP-like (469 aa).

The N-terminal stretch at 1-25 (MKVCQKYTAVLLVWLSAVVSMRAGA) is a signal peptide. Catalysis depends on charge relay system residues His108, Asp138, and Ser211. Residues 209–211 (GNS) and 266–270 (LGVLI) contribute to the substrate site. PDZ domains are found at residues 255-346 (LKDT…VRRG) and 352-457 (AVEI…IRQG).

It belongs to the peptidase S1C family.

It localises to the periplasm. It carries out the reaction Acts on substrates that are at least partially unfolded. The cleavage site P1 residue is normally between a pair of hydrophobic residues, such as Val-|-Val.. In terms of biological role, might be efficient in the degradation of transiently denatured and unfolded proteins which accumulate in the periplasm following stress conditions. This chain is Probable periplasmic serine endoprotease DegP-like (mucD), found in Hahella chejuensis (strain KCTC 2396).